We begin with the raw amino-acid sequence, 571 residues long: Proline--tRNA ligase (571 aa).

Belongs to the class-II aminoacyl-tRNA synthetase family. ProS type 1 subfamily. In terms of assembly, homodimer.

It localises to the cytoplasm. It carries out the reaction tRNA(Pro) + L-proline + ATP = L-prolyl-tRNA(Pro) + AMP + diphosphate. Functionally, catalyzes the attachment of proline to tRNA(Pro) in a two-step reaction: proline is first activated by ATP to form Pro-AMP and then transferred to the acceptor end of tRNA(Pro). As ProRS can inadvertently accommodate and process non-cognate amino acids such as alanine and cysteine, to avoid such errors it has two additional distinct editing activities against alanine. One activity is designated as 'pretransfer' editing and involves the tRNA(Pro)-independent hydrolysis of activated Ala-AMP. The other activity is designated 'posttransfer' editing and involves deacylation of mischarged Ala-tRNA(Pro). The misacylated Cys-tRNA(Pro) is not edited by ProRS. The sequence is that of Proline--tRNA ligase from Mannheimia succiniciproducens (strain KCTC 0769BP / MBEL55E).